The sequence spans 500 residues: L-arabinose isomerase (500 aa).

Mn(2+)-binding residues include E306, E333, H349, and H448.

This sequence belongs to the arabinose isomerase family. Mn(2+) is required as a cofactor.

It carries out the reaction beta-L-arabinopyranose = L-ribulose. It functions in the pathway carbohydrate degradation; L-arabinose degradation via L-ribulose; D-xylulose 5-phosphate from L-arabinose (bacterial route): step 1/3. In terms of biological role, catalyzes the conversion of L-arabinose to L-ribulose. This chain is L-arabinose isomerase, found in Shewanella sp. (strain MR-7).